A 206-amino-acid polypeptide reads, in one-letter code: Triafestin-2 (206 aa).

Positions 1 to 18 are cleaved as a signal peptide; that stretch reads MKTILAVIFFGILAFAFA. N-linked (GlcNAc...) asparagine glycosylation is found at N25, N55, and N178.

This sequence belongs to the calycin superfamily. Triabin family. In terms of assembly, interacts with host coagulation factor XII (F12) (inactive and activated) (via amino acids 1-77). Interacts with host high molecular weight kininogen (KNG1) (via amino acids 402-532). As to expression, salivary gland (at protein level).

It is found in the secreted. With respect to regulation, zn(2+) modulates binding to host coagulation factor XII (F12) and high molecular weight kininogen (KNG1). Functionally, suppresses activation of the host plasma kallikrein-kinin system, leading to inhibition of the intrinsic coagulation pathway. Blocks host coagulation factor XII (F12) and prekallikrein (KLKB1) reciprocal activation without affecting their amidolytic activities. Blocks binding of host F12 and high molecular weight kininogen (KNG1) to negatively charged surfaces. Attenuates generation of bradykinin by interfering with activation of host kallikrein-kinin system. The chain is Triafestin-2 from Triatoma infestans (Assassin bug).